A 280-amino-acid polypeptide reads, in one-letter code: Lipase chaperone (280 aa).

The helical transmembrane segment at 5 to 22 (ALTIITIASGSLGAVYFL) threads the bilayer.

The protein belongs to the lipase chaperone family.

It localises to the cell inner membrane. Its function is as follows. May be involved in the folding of the extracellular lipase during its passage through the periplasm. The chain is Lipase chaperone (lifO) from Vibrio vulnificus (strain YJ016).